A 462-amino-acid polypeptide reads, in one-letter code: Cathepsin F (462 aa).

The signal sequence occupies residues 1–19; that stretch reads MAPLLQLLWLLTLLSTVAL. A propeptide spans 20–248 (activation peptide); that stretch reads SPVPAKPWAD…MSPAKSINDL (229 aa). N-linked (GlcNAc...) asparagine glycosylation is found at Asn35, Asn138, and Asn173. Intrachain disulfides connect Cys270–Cys311 and Cys304–Cys344. The active site involves Cys273. Asn345 and Asn356 each carry an N-linked (GlcNAc...) asparagine glycan. A disulfide bond links Cys402 and Cys450. His409 is an active-site residue. Asn418 carries an N-linked (GlcNAc...) asparagine glycan. The active site involves Asn429.

It belongs to the peptidase C1 family.

It localises to the lysosome. It catalyses the reaction The recombinant enzyme cleaves synthetic substrates with Phe and Leu (better than Val) in P2, with high specificity constant (kcat/Km) comparable to that of cathepsin L.. Its function is as follows. Thiol protease which is believed to participate in intracellular degradation and turnover of proteins. Has also been implicated in tumor invasion and metastasis. This Mus musculus (Mouse) protein is Cathepsin F (Ctsf).